The primary structure comprises 502 residues: MKVRTRIAPSPTGFPHVGTAYIALFNLCFAKQHGGEFILRIEDTDQLRSTPESEQMILDSLRWLGLNWSEGPDVGGPHAPYRQSERMGIYKQYALDLIEKGHAFYCFATAEELDQMRAEQQARGETPKYDGRGLKLSQEEVERRLAAGEPHVIRMKVPEEGICKFNDLLRGEVEIPWAQVDMQVLLKTDGLPTYHLANVVDDHLMEITHVLRGEEWLPSAPKHQLLYQYFGWDMPTLCHMPLLRNPDKSKLSKRKNPTSINYYRDIGVLPEALLNYLGRMGWSMPDEREVFTLTDMIEHFDIQRVSLGGPIFDVDKLNWLNGQWIKSLTPGQLLDRLLSWKSDRQTLEDIATAIQPRINLLSEAVNWAGFYFNHMPNITAEMFESKKLSPEQVRQSLQFAIWRLESQFTWNNETVSQILMDLANQMDIKLRDFMPAFFIAIAGSTSSTPVMQSMVTIGPDLTFARLRRALEIVGAPSKKELKVWEKLNESLKLPKNETVDNT.

Positions 9 to 19 (PSPTGFPHVGT) match the 'HIGH' region motif. The short motif at 250–254 (KLSKR) is the 'KMSKS' region element. Lysine 253 contributes to the ATP binding site.

The protein belongs to the class-I aminoacyl-tRNA synthetase family. Glutamate--tRNA ligase type 1 subfamily. In terms of assembly, monomer.

It is found in the cytoplasm. It catalyses the reaction tRNA(Glu) + L-glutamate + ATP = L-glutamyl-tRNA(Glu) + AMP + diphosphate. In terms of biological role, catalyzes the attachment of glutamate to tRNA(Glu) in a two-step reaction: glutamate is first activated by ATP to form Glu-AMP and then transferred to the acceptor end of tRNA(Glu). In Acinetobacter baylyi (strain ATCC 33305 / BD413 / ADP1), this protein is Glutamate--tRNA ligase.